A 194-amino-acid chain; its full sequence is MDFILNISMKMEVIFKTDLRSSSQVVFHAGSLYNWFSVEIINSGRIVTTAIKTLLSTVKYDIVKSAHIYAGQGYTEHQAQEEWNMILHVLFEEETESSASSESIHEKNDNETNECTSSFETLFEQEPSSEEPKDSKLYMLAQKTVQHIEQYGKAPDFNKVIRAHNFIQTIHGTPLKEEEKEVVRLMVIKLLKKK.

Belongs to the asfivirus phosphoprotein p30 family. Oligomer. Interacts with host HNRNPK. Post-translationally, phosphorylated on serine residues in the 115 N-terminal amino acids.

The protein resides in the host cytoplasm. Its subcellular location is the host nucleus. It is found in the virion. In terms of biological role, modifies the subcellular distribution of heterogeneous nuclear ribonucleoprotein K (HNRNPK) and may contribute to modulate HNRNPK functions related to processing and export of mRNAs during ASFV infection. Necessary for virus internalization. The chain is Phosphoprotein p30 from Ornithodoros (relapsing fever ticks).